A 582-amino-acid polypeptide reads, in one-letter code: uncharacterized protein (582 aa).

Over residues Met1 to Arg23 the composition is skewed to basic and acidic residues. Disordered regions lie at residues Met1–Val29, Ala110–Gln133, and Leu147–Gly221. Ser242 carries the phosphoserine modification. Disordered regions lie at residues Arg310 to His331 and Leu551 to Arg582. A compositionally biased stretch (polar residues) spans Pro311–Ala320.

This is an uncharacterized protein from Homo sapiens (Human).